Consider the following 741-residue polypeptide: MKTIQGKSPGRWYSRGMLLAAMAASGVIGLAACGGGNDGNSAGNNGNAGGNGNNNGNNNGNTVSNTKPSFVGTVTVRRFDGVSDDLLTAGLGASGLASATAPAVANAVAPTAAELRRLTIYNNYRALIDTSAKGGYGTLYGPNVDADGNVTSGNGMVAGAEYVAYPDDGSGQQNVVLLVQIPDAFDAAHPCIITATSSGSRGIYGAISTGEWGLKRKCAVAYTDKGTGAGPHDLATDTVPLQDGTRTTRTLAGNTAQFAAPLAASRLAAFNVATPNRLAFKHAHSQRNPEKDWGLFTLQAVQFAFWAINDKLGISSGQTVSQLPVRPGNTIVIASSVSNGGGAAIAAAEQDTGNLIDGVAVGEPALSLPSSINVQVKRGGASLPINGKPLFDYVSYANEFRLCAALSASVASAPTQAYFGAALGWPASVQANRCAALHAKGLLSSTTTAAQADEALQKMRDYGWEPESDLLHASMAYFEIDPSVATTFGNALARASVFDNLCDLSFAAVDGSFHPATMNATVLAQLAATGNGVPPTTGVQLINNIAQGGAAQSRQSIDSSGTQAANLDGALCLRNLLSGSDAASQALQLGLSQTLRSGNLRGKPALIVQGRNDALLPVNHGARPYLGLNAQVDGSSKLSYIEVTNAQHFDGFIDLLPGYDSLFVPLAVYEQRALDAVYANLRSGTPLPPSQVVRTTPRGGAAGAAPPITAANVPNFTMTPAAGDRIQVSVSGGVATVSVPN.

Positions 1 to 23 are cleaved as a signal peptide; the sequence is MKTIQGKSPGRWYSRGMLLAAMA. A disordered region spans residues 45–68; that stretch reads NGNAGGNGNNNGNNNGNTVSNTKP. Ser338 (charge relay system) is an active-site residue.

Belongs to the D-(-)-3-hydroxybutyrate oligomer hydrolase family.

Its subcellular location is the secreted. The enzyme catalyses (3R)-hydroxybutanoate dimer + H2O = 2 (R)-3-hydroxybutanoate + H(+). Its pathway is lipid metabolism; butanoate metabolism. Functionally, participates in the degradation of poly-3-hydroxybutyrate (PHB). It works downstream of poly(3-hydroxybutyrate) depolymerase, hydrolyzing D(-)-3-hydroxybutyrate oligomers of various length (3HB-oligomers) into 3HB-monomers. The sequence is that of D-(-)-3-hydroxybutyrate oligomer hydrolase from Ralstonia pickettii (Burkholderia pickettii).